The chain runs to 922 residues: Histidine kinase 5 (922 aa).

Coiled-coil stretches lie at residues 86 to 120 (MQDN…EEYK) and 169 to 205 (KQKA…SQSA). The Histidine kinase domain occupies 373 to 614 (TMSHEIRSPL…TFTFILPYKV (242 aa)). Position 376 is a phosphohistidine; by autocatalysis (His-376). 2 disordered regions span residues 620-639 (YSDD…EPDD) and 728-773 (NGRC…TEVK). Over residues 738 to 747 (SCSSSQASSE) the composition is skewed to low complexity. The span at 761 to 773 (SHREEEKAETEVK) shows a compositional bias: basic and acidic residues. Residues 779 to 921 (KILLVEDNKI…KLRECLQQYL (143 aa)) enclose the Response regulatory domain. Mg(2+)-binding residues include Asp-785, Asp-828, and Cys-830. Position 828 is a 4-aspartylphosphate (Asp-828).

Interacts with AHP1, APH2, APH3, APH5 and APH6, but not with APH4. As to expression, present in light-grown but not in etiolated seedlings. Mostly expressed in roots flowers and siliques, and, to a lower extent, in stems and leaves, especially in guard cells.

The protein localises to the cell membrane. It is found in the cytoplasm. It catalyses the reaction ATP + protein L-histidine = ADP + protein N-phospho-L-histidine.. Functions as a histidine kinase and transmits the stress signal to a downstream MAPK cascade. This protein undergoes an ATP-dependent autophosphorylation at a conserved histidine residue in the kinase core, and a phosphoryl group is then transferred to a conserved aspartate residue in the receiver domain. Negative regulator of the ETR1-dependent abscisic acid (ABA) and ethylene signaling pathway that inhibits the root elongation. Promotes stomatal closure. Regulates stomatal opening by integrating multiple signals via hydrogen peroxide H(2)O(2) homeostasis in guard cells in an ABA-independent manner. May contribute to basal defense mechanisms by closing stomata in the presence of bacterial pathogens. Regulates both hormone levels and ROS production in response to stress. Required for full immunity to bacterial pathogen and necrotrophic fungus. The sequence is that of Histidine kinase 5 (AHK5) from Arabidopsis thaliana (Mouse-ear cress).